The chain runs to 209 residues: Kynurenine formamidase (209 aa).

F19 contacts substrate. Zn(2+)-binding residues include H49, H53, and D55. The active-site Proton donor/acceptor is H59. The Zn(2+) site is built by H160 and E172.

It belongs to the Cyclase 1 superfamily. KynB family. Homodimer. Requires Zn(2+) as cofactor.

The catalysed reaction is N-formyl-L-kynurenine + H2O = L-kynurenine + formate + H(+). It participates in amino-acid degradation; L-tryptophan degradation via kynurenine pathway; L-kynurenine from L-tryptophan: step 2/2. In terms of biological role, catalyzes the hydrolysis of N-formyl-L-kynurenine to L-kynurenine, the second step in the kynurenine pathway of tryptophan degradation. In Delftia acidovorans (strain DSM 14801 / SPH-1), this protein is Kynurenine formamidase.